The sequence spans 435 residues: Xylose isomerase (435 aa).

Residues histidine 99 and aspartate 102 contribute to the active site. Mg(2+) contacts are provided by glutamate 230, glutamate 266, histidine 269, aspartate 294, aspartate 305, aspartate 307, and aspartate 337.

Belongs to the xylose isomerase family. As to quaternary structure, homotetramer. It depends on Mg(2+) as a cofactor.

The protein localises to the cytoplasm. It catalyses the reaction alpha-D-xylose = alpha-D-xylulofuranose. This is Xylose isomerase (xylA) from Tetragenococcus halophilus (Pediococcus halophilus).